Consider the following 203-residue polypeptide: Outer-membrane lipoprotein carrier protein (203 aa).

A signal peptide spans 1 to 21; that stretch reads MKKLLVACCLLSGLISAHALA.

This sequence belongs to the LolA family. In terms of assembly, monomer.

It localises to the periplasm. Functionally, participates in the translocation of lipoproteins from the inner membrane to the outer membrane. Only forms a complex with a lipoprotein if the residue after the N-terminal Cys is not an aspartate (The Asp acts as a targeting signal to indicate that the lipoprotein should stay in the inner membrane). This is Outer-membrane lipoprotein carrier protein from Yersinia enterocolitica serotype O:8 / biotype 1B (strain NCTC 13174 / 8081).